Reading from the N-terminus, the 897-residue chain is Transportin-2 (897 aa).

HEAT repeat units lie at residues 9–36 (GLQQ…DKLK), 41–79 (FPDF…AHYQ), 88–121 (FIKQ…KGEL), 127–164 (LLPQ…LDSD), 171–201 (NIMI…QFIM), 214–241 (FIEH…VMLL), 253–280 (HSII…FWLT), 296–386 (VQLI…LANV), 394–422 (HLLP…GAIA), 434–461 (PELI…TLSR), 475–508 (LKPL…EEEA), 516–549 (LSYI…ADSV), 557–595 (EYIQ…TALQ), 603–654 (EPVY…GLGG), 665–696 (IMTL…KACF), 704–737 (AEFM…MQMG), 745–790 (QMVL…YVCP), 798–831 (QQFI…IGVN), 840–871 (IFFC…KDQV), and 874–894 (DNWQ…LAAF). The 69-residue stretch at 31-99 (VQDKLKQLNQ…KQECLNNIGD (69 aa)) folds into the Importin N-terminal domain. The tract at residues 325-364 (AVPDSEQDIKPRFHKSRTVTLPHEAERPDGSEDAEDDDDD) is disordered. Positions 355 to 364 (SEDAEDDDDD) are enriched in acidic residues. N6-acetyllysine is present on Lys-862.

It belongs to the importin beta family. Importin beta-2 subfamily.

Its subcellular location is the cytoplasm. It localises to the nucleus. Its function is as follows. Probably functions in nuclear protein import as nuclear transport receptor. Serves as receptor for nuclear localization signals (NLS) in cargo substrates. Is thought to mediate docking of the importin/substrate complex to the nuclear pore complex (NPC) through binding to nucleoporin and the complex is subsequently translocated through the pore by an energy requiring, Ran-dependent mechanism. At the nucleoplasmic side of the NPC, Ran binds to the importin, the importin/substrate complex dissociates and importin is re-exported from the nucleus to the cytoplasm where GTP hydrolysis releases Ran. The directionality of nuclear import is thought to be conferred by an asymmetric distribution of the GTP- and GDP-bound forms of Ran between the cytoplasm and nucleus. The sequence is that of Transportin-2 (TNPO2) from Homo sapiens (Human).